The sequence spans 65 residues: UPF0434 protein RPB_0294 (65 aa).

Belongs to the UPF0434 family.

This is UPF0434 protein RPB_0294 from Rhodopseudomonas palustris (strain HaA2).